We begin with the raw amino-acid sequence, 361 residues long: Putative agmatine deiminase (361 aa).

C354 (amidino-cysteine intermediate) is an active-site residue.

It belongs to the agmatine deiminase family.

The catalysed reaction is agmatine + H2O = N-carbamoylputrescine + NH4(+). The sequence is that of Putative agmatine deiminase from Streptococcus pneumoniae (strain ATCC BAA-255 / R6).